A 268-amino-acid polypeptide reads, in one-letter code: Undecaprenyl-diphosphatase (268 aa).

Helical transmembrane passes span 43-63, 85-105, 108-128, 141-161, 184-204, 217-237, and 246-266; these read FWKT…LAIY, IGVL…GTFI, VLFN…VLLW, AMAF…AAMV, AAEF…VYDV, FIII…VKTF, and FTFF…ALAL.

It belongs to the UppP family.

Its subcellular location is the cell inner membrane. It catalyses the reaction di-trans,octa-cis-undecaprenyl diphosphate + H2O = di-trans,octa-cis-undecaprenyl phosphate + phosphate + H(+). Functionally, catalyzes the dephosphorylation of undecaprenyl diphosphate (UPP). Confers resistance to bacitracin. The sequence is that of Undecaprenyl-diphosphatase from Afipia carboxidovorans (strain ATCC 49405 / DSM 1227 / KCTC 32145 / OM5) (Oligotropha carboxidovorans).